A 271-amino-acid polypeptide reads, in one-letter code: 5-deoxy-glucuronate isomerase (271 aa).

Belongs to the isomerase IolB family.

It carries out the reaction 5-deoxy-D-glucuronate = 5-dehydro-2-deoxy-D-gluconate. Its pathway is polyol metabolism; myo-inositol degradation into acetyl-CoA; acetyl-CoA from myo-inositol: step 4/7. Its function is as follows. Involved in the isomerization of 5-deoxy-glucuronate (5DG) to 5-dehydro-2-deoxy-D-gluconate (DKG or 2-deoxy-5-keto-D-gluconate). This chain is 5-deoxy-glucuronate isomerase, found in Bacillus subtilis subsp. natto.